A 360-amino-acid chain; its full sequence is D-alanine--D-alanine ligase (360 aa).

The ATP-grasp domain maps to 146-352 (KICAEHAGLH…FSQLIDRLLQ (207 aa)). 179–234 (LEEFTLPFFVKPASQGSSIGITKVHRPEELAAALEKAFMVDTKVLIEKTIEGREIE) serves as a coordination point for ATP. Residues Asp-305, Glu-319, and Asn-321 each coordinate Mg(2+).

It belongs to the D-alanine--D-alanine ligase family. It depends on Mg(2+) as a cofactor. Mn(2+) is required as a cofactor.

The protein localises to the cytoplasm. The catalysed reaction is 2 D-alanine + ATP = D-alanyl-D-alanine + ADP + phosphate + H(+). It participates in cell wall biogenesis; peptidoglycan biosynthesis. In terms of biological role, cell wall formation. The chain is D-alanine--D-alanine ligase from Prosthecochloris aestuarii (strain DSM 271 / SK 413).